A 424-amino-acid polypeptide reads, in one-letter code: Elongation factor Tu, mitochondrial (424 aa).

The region spanning 36–234 (KPHVNVGTIG…VLDTKIPLPH (199 aa)) is the tr-type G domain. The interval 45 to 52 (GHVDHGKT) is G1. GTP is bound at residue 45 to 52 (GHVDHGKT). Residues 86–90 (GITIT) are G2. The G3 stretch occupies residues 107–110 (DCPG). Residues 107 to 111 (DCPGH) and 162 to 165 (NKMD) contribute to the GTP site. The tract at residues 162–165 (NKMD) is G4. Positions 199-201 (AAA) are G5.

It belongs to the TRAFAC class translation factor GTPase superfamily. Classic translation factor GTPase family. EF-Tu/EF-1A subfamily.

It localises to the mitochondrion. This protein promotes the GTP-dependent binding of aminoacyl-tRNA to the A-site of ribosomes during protein biosynthesis. In Dictyostelium discoideum (Social amoeba), this protein is Elongation factor Tu, mitochondrial (tufm).